The following is a 1001-amino-acid chain: uncharacterized protein (1001 aa).

Residues 939 to 948 are compositionally biased toward basic and acidic residues; that stretch reads KVVDNKRDAS. Positions 939–1001 are disordered; it reads KVVDNKRDAS…HTSKRVQKKN (63 aa). Serine 948 and serine 950 each carry phosphoserine.

This is an uncharacterized protein from Schizosaccharomyces pombe (strain 972 / ATCC 24843) (Fission yeast).